Consider the following 215-residue polypeptide: 3-isopropylmalate dehydratase small subunit (215 aa).

Belongs to the LeuD family. LeuD type 1 subfamily. In terms of assembly, heterodimer of LeuC and LeuD.

The catalysed reaction is (2R,3S)-3-isopropylmalate = (2S)-2-isopropylmalate. It functions in the pathway amino-acid biosynthesis; L-leucine biosynthesis; L-leucine from 3-methyl-2-oxobutanoate: step 2/4. Functionally, catalyzes the isomerization between 2-isopropylmalate and 3-isopropylmalate, via the formation of 2-isopropylmaleate. The protein is 3-isopropylmalate dehydratase small subunit of Polynucleobacter necessarius subsp. necessarius (strain STIR1).